The following is a 224-amino-acid chain: Probable GTP-binding protein EngB (224 aa).

Positions 31–204 constitute an EngB-type G domain; it reads VGVEIAFAGR…LGILDQWCKP (174 aa). GTP-binding positions include 39-46, 65-69, 83-86, 150-153, and 183-185; these read GRSNAGKS, GRTQL, DLPG, TKAD, and FSS. S46 and T67 together coordinate Mg(2+).

It belongs to the TRAFAC class TrmE-Era-EngA-EngB-Septin-like GTPase superfamily. EngB GTPase family. Requires Mg(2+) as cofactor.

Necessary for normal cell division and for the maintenance of normal septation. This Shewanella piezotolerans (strain WP3 / JCM 13877) protein is Probable GTP-binding protein EngB.